A 643-amino-acid chain; its full sequence is Type VI secretion system spike protein VgrG1a (643 aa).

The protein belongs to the VgrG protein family. As to quaternary structure, forms homotrimers. Part of the type VI secretion system (T6SS). Interacts with EagT6 and Tse6; these interactions are required for Tse6 loading onto VgrG1. Interacts with Hcp1.

It localises to the secreted. Part of the H1 type VI secretion system (H1-T6SS) specialized secretion system, which delivers several virulence factors in both prokaryotic and eukaryotic cells during infection. Forms the spike at the tip of the elongating tube formed by haemolysin co-regulated protein 1/Hcp1. Allows the delivery of the Tse6 toxin to target cells where it exerts its toxicity. The polypeptide is Type VI secretion system spike protein VgrG1a (Pseudomonas aeruginosa (strain ATCC 15692 / DSM 22644 / CIP 104116 / JCM 14847 / LMG 12228 / 1C / PRS 101 / PAO1)).